We begin with the raw amino-acid sequence, 756 residues long: 5-methyltetrahydropteroyltriglutamate--homocysteine methyltransferase (756 aa).

Residues R16–K19 and K116 each bind 5-methyltetrahydropteroyltri-L-glutamate. L-homocysteine-binding positions include I433–S435 and E486. L-methionine is bound by residues I433 to S435 and E486. Residues R517 to C518 and W563 contribute to the 5-methyltetrahydropteroyltri-L-glutamate site. D601 lines the L-homocysteine pocket. An L-methionine-binding site is contributed by D601. E607 provides a ligand contact to 5-methyltetrahydropteroyltri-L-glutamate. Zn(2+)-binding residues include H643, C645, and E667. H696 serves as the catalytic Proton donor. C728 contacts Zn(2+).

Belongs to the vitamin-B12 independent methionine synthase family. Zn(2+) serves as cofactor.

It catalyses the reaction 5-methyltetrahydropteroyltri-L-glutamate + L-homocysteine = tetrahydropteroyltri-L-glutamate + L-methionine. Its pathway is amino-acid biosynthesis; L-methionine biosynthesis via de novo pathway; L-methionine from L-homocysteine (MetE route): step 1/1. Catalyzes the transfer of a methyl group from 5-methyltetrahydrofolate to homocysteine resulting in methionine formation. This Buchnera aphidicola subsp. Baizongia pistaciae (strain Bp) protein is 5-methyltetrahydropteroyltriglutamate--homocysteine methyltransferase.